The following is a 513-amino-acid chain: Sugar transport protein MST8 (513 aa).

The Cytoplasmic portion of the chain corresponds to 1–17 (MAGGAMTDTDGAHKNYP). The chain crosses the membrane as a helical span at residues 18 to 38 (GKMTIFVFLACLVASSGGLIF). The Extracellular segment spans residues 39 to 81 (GYDIGISGGVTSMDSFLIKFFPSVYAKEKEMVETNQYCKFDSE). A helical transmembrane segment spans residues 82-102 (LLTLFTSSLYLAALIASLFAS). At 103–116 (VITRKFGRRITMLG) the chain is on the cytoplasmic side. A helical transmembrane segment spans residues 117 to 137 (GGVIFLVGAILNGAAADVAML). Residues 138 to 139 (II) lie on the Extracellular side of the membrane. Residues 140–160 (GRILLGIGVGFSNQAVPLYLS) traverse the membrane as a helical segment. Residues 161 to 166 (EMAPAR) are Cytoplasmic-facing. Residues 167–187 (MRGMLNISFQLMITVGILAAN) form a helical membrane-spanning segment. At 188 to 201 (LINYFTDKIAGGWG) the chain is on the extracellular side. A helical transmembrane segment spans residues 202-222 (WRVSLGLAAVPAVIMAGGSLF). Residues 223 to 294 (LPDTPNSLLS…LVMSVLIPTL (72 aa)) lie on the Cytoplasmic side of the membrane. A helical membrane pass occupies residues 295 to 315 (QQLTGINVVMFYAPVLFKTIG). Over 316 to 320 (FGGTA) the chain is Extracellular. The helical transmembrane segment at 321–341 (SLMSAVITGLVNMFATFVSIA) threads the bilayer. Over 342-347 (TVDRLG) the chain is Cytoplasmic. A helical membrane pass occupies residues 348 to 368 (RRKLLLQGGVQMIFAQFILGT). Over 369–385 (LIAVKFGTAGVANISRG) the chain is Extracellular. A helical transmembrane segment spans residues 386–406 (YAIVVVLCICVFVSAFAWSWG). Over 407-425 (PLGWLVPSEIFPLEIRSAA) the chain is Cytoplasmic. The chain crosses the membrane as a helical span at residues 426 to 446 (QSVVVVFNMAFTFIIAQIFLM). The Extracellular portion of the chain corresponds to 447–450 (MLCH). A helical membrane pass occupies residues 451–471 (LKFGLFYFFGAMELIMTGFVF). Residues 472–512 (FFLPETKGIPIEEMDRIWGKHWYWRRFVGAGAGGKVEITST) are Cytoplasmic-facing.

This sequence belongs to the major facilitator superfamily. Sugar transporter (TC 2.A.1.1) family. In terms of tissue distribution, expressed specifically in anthers.

The protein localises to the membrane. Functionally, mediates active uptake of hexoses by sugar:proton symport. May play an important role in transporting monosaccharides during anther development. The chain is Sugar transport protein MST8 from Oryza sativa subsp. japonica (Rice).